Consider the following 865-residue polypeptide: AdoMet-dependent rRNA methyltransferase SPB1 (865 aa).

S-adenosyl-L-methionine is bound by residues Gly56, Trp58, Asp76, Asp92, and Asp117. Residue Lys157 is the Proton acceptor of the active site. Coiled-coil stretches lie at residues 358-400 and 462-492; these read ESMD…VRMQ and GETD…RKAA. Disordered stretches follow at residues 370–396 and 443–676; these read LEKL…QKDI and VVAS…TKDG. Over residues 386 to 396 the composition is skewed to basic and acidic residues; sequence RKENERKQKDI. A compositionally biased stretch (acidic residues) spans 463-483; that stretch reads ETDDESDEELDRLETELDDMY. Over residues 484–497 the composition is skewed to basic and acidic residues; the sequence is DQFRERKAASDAKY. The span at 526-545 shows a compositional bias: acidic residues; sequence ISDDSELEEESSGDSDDEDD. Residues 556–566 show a composition bias toward polar residues; sequence LDTTPSDNSGL. Acidic residues predominate over residues 600-609; the sequence is GEDEDADMED. Basic and acidic residues-rich tracts occupy residues 610 to 627 and 659 to 676; these read TVSK…ADKK and KSGK…TKDG. Positions 762–789 form a coiled coil; that stretch reads REAKGRKKMKAAQRLEKLKKKSDLLVNE.

The protein belongs to the class I-like SAM-binding methyltransferase superfamily. RNA methyltransferase RlmE family. SPB1 subfamily. Component of the nucleolar and nucleoplasmic pre-60S ribosomal particle.

It localises to the nucleus. The protein localises to the nucleolus. It carries out the reaction a ribonucleotide in rRNA + S-adenosyl-L-methionine = a 2'-O-methylribonucleotide in rRNA + S-adenosyl-L-homocysteine + H(+). In terms of biological role, required for proper assembly of pre-ribosomal particles during the biogenesis of the 60S ribosomal subunit. In Pyricularia oryzae (strain 70-15 / ATCC MYA-4617 / FGSC 8958) (Rice blast fungus), this protein is AdoMet-dependent rRNA methyltransferase SPB1.